Reading from the N-terminus, the 364-residue chain is Fructose-bisphosphate aldolase, non-muscle type (364 aa).

Residues R56 and K147 each coordinate substrate. K230 acts as the Schiff-base intermediate with dihydroxyacetone-P in catalysis.

The protein belongs to the class I fructose-bisphosphate aldolase family. Homotetramer. In terms of tissue distribution, expressed mainly in the liver and also in brain and other tissues, except for the heart muscle.

It carries out the reaction beta-D-fructose 1,6-bisphosphate = D-glyceraldehyde 3-phosphate + dihydroxyacetone phosphate. It participates in carbohydrate degradation; glycolysis; D-glyceraldehyde 3-phosphate and glycerone phosphate from D-glucose: step 4/4. This is Fructose-bisphosphate aldolase, non-muscle type from Lethenteron camtschaticum (Japanese lamprey).